We begin with the raw amino-acid sequence, 418 residues long: Alditol oxidase (418 aa).

The FAD-binding PCMH-type domain occupies 13–179; sequence ITYTAKELLR…TSLTLDLEPA (167 aa). Residues 41-47, S106, S111, G114, 118-121, and V169 contribute to the FAD site; these read VLGSGHS and TGTH. H46 carries the pros-8alpha-FAD histidine modification. S106 contributes to the D-sorbitol binding site. S106 is a xylitol binding site. D-sorbitol is bound by residues E320, R322, and T345. E320, R322, and T345 together coordinate xylitol. R322 is an FAD binding site. H372 contributes to the FAD binding site. K375 lines the D-sorbitol pocket. K375 provides a ligand contact to xylitol.

This sequence belongs to the oxygen-dependent FAD-linked oxidoreductase family. In terms of assembly, monomer. Requires FAD as cofactor.

The catalysed reaction is an alditol + O2 = an aldose + H2O2. It catalyses the reaction xylitol + O2 = D-xylose + H2O2. It carries out the reaction D-sorbitol + O2 = D-glucose + H2O2. Functionally, oxidase that performs selective oxidation of the terminal primary hydroxyl group of several alditols, with a reduction of O2 to H2O2. Shows highest activity on xylitol and D-sorbitol, and a poor efficiency with D-mannitol and L-threitol. The sequence is that of Alditol oxidase (xyoA) from Streptomyces coelicolor (strain ATCC BAA-471 / A3(2) / M145).